Consider the following 595-residue polypeptide: Elongation factor 4 2 (595 aa).

In terms of domain architecture, tr-type G spans 4–187 (SHIRNFAIIA…AIKQRLPAPQ (184 aa)). GTP-binding positions include 16–21 (DHGKST) and 133–136 (NKVD).

It belongs to the TRAFAC class translation factor GTPase superfamily. Classic translation factor GTPase family. LepA subfamily.

The protein resides in the cell membrane. The enzyme catalyses GTP + H2O = GDP + phosphate + H(+). Required for accurate and efficient protein synthesis under certain stress conditions. May act as a fidelity factor of the translation reaction, by catalyzing a one-codon backward translocation of tRNAs on improperly translocated ribosomes. Back-translocation proceeds from a post-translocation (POST) complex to a pre-translocation (PRE) complex, thus giving elongation factor G a second chance to translocate the tRNAs correctly. Binds to ribosomes in a GTP-dependent manner. This chain is Elongation factor 4 2, found in Lactiplantibacillus plantarum (strain ATCC BAA-793 / NCIMB 8826 / WCFS1) (Lactobacillus plantarum).